The sequence spans 281 residues: Protein phosphatase 2C homolog 1 (281 aa).

The PPM-type phosphatase domain occupies 20 to 281; sequence RVGVAENKNS…DNVTVMVVFL (262 aa). Mn(2+) is bound by residues Asp-58, Gly-59, Asp-233, and Asp-272.

This sequence belongs to the PP2C family. Interacts with NBP2 and PBS2. Requires Mg(2+) as cofactor. Mn(2+) is required as a cofactor.

Its subcellular location is the peroxisome. It carries out the reaction O-phospho-L-seryl-[protein] + H2O = L-seryl-[protein] + phosphate. The catalysed reaction is O-phospho-L-threonyl-[protein] + H2O = L-threonyl-[protein] + phosphate. In terms of biological role, serine and threonine phosphatase. Involved in tRNA splicing and cell separation. This is Protein phosphatase 2C homolog 1 (PTC1) from Saccharomyces cerevisiae (strain ATCC 204508 / S288c) (Baker's yeast).